The following is a 255-amino-acid chain: tRNA (guanine-N(1)-)-methyltransferase (255 aa).

Residues glycine 113 and 133 to 138 (IGDYVL) each bind S-adenosyl-L-methionine.

This sequence belongs to the RNA methyltransferase TrmD family. As to quaternary structure, homodimer.

It localises to the cytoplasm. It catalyses the reaction guanosine(37) in tRNA + S-adenosyl-L-methionine = N(1)-methylguanosine(37) in tRNA + S-adenosyl-L-homocysteine + H(+). In terms of biological role, specifically methylates guanosine-37 in various tRNAs. In Salmonella agona (strain SL483), this protein is tRNA (guanine-N(1)-)-methyltransferase.